Reading from the N-terminus, the 647-residue chain is MVPSLLLLLTGLFRATEPAPRCETGQETLGQCQTAQKAKCVDISLSSCTDVTYTQTMYPNFLDQKSREVIEYSSEYILISVLHNLLQGECNPDLRLLGCSVLAPQCEKDKVIKPCRHVCENLKKNCLSAFDAIDMAWPYFLDCDRFFAGEEEGCFDPLAKLRGEVAVEEDLPSDFPATFIQFKHHSYSQMVSTLKKTASRCSHIATTYSIGRSFEGKDLFVIEFSTKPGHHELLKPEFKYIGNMHGNEVVGKELLYTLRSICVQKYLLGNPRIQTLINNTRIHLLPSLNPDGYERAAEEGAGYNGWVIGRQTAQNLDLNRNFPDLTSEAYRRAGIRGARLDHIPIPQSYWWGKVAPETKAVMKWMRSIPFVLSASLHGGELVVTYPYDYSRHPMEEKEFSPTPDEKMFKMLAKAYADAHPVISDRSEHRCGGNFVKRGGIINGAEWYSFTGGMADFNYLHTNCFEVTVEVGCEKFPLEEELFTIWHENRDALLNYMEMVHRGIKGIVSDKFGNPIKNARISVRGIQHDITTAADGDYWRLLPPGTYIVTAQAMGYTKVMKRVTLPIKMKRAGRVDFVLRPIEIWPNKLLRRPMEDMYDQYDPLELFDPHAQHAQARGGSQQVREKPWWWSYFSSLDLHKPLWLLKQH.

Residues 1–18 (MVPSLLLLLTGLFRATEP) form the signal peptide. In terms of domain architecture, FZ spans 35-157 (AQKAKCVDIS…AGEEEGCFDP (123 aa)). 5 disulfides stabilise this stretch: Cys40/Cys106, Cys48/Cys99, Cys90/Cys126, Cys115/Cys154, and Cys119/Cys143. A Peptidase M14 domain is found at 183 to 499 (KHHSYSQMVS…DALLNYMEMV (317 aa)). Zn(2+)-binding residues include His245 and Glu248. The N-linked (GlcNAc...) asparagine glycan is linked to Asn278. His377 provides a ligand contact to Zn(2+). The Proton donor/acceptor role is filled by Glu469.

This sequence belongs to the peptidase M14 family. Interacts with WNT4 vie its FZ domain. Zn(2+) serves as cofactor. As to expression, in the early embryo it is initially expressed throughout the somites and subsequently becomes restricted to the sclerotome. Expressed in somites, paraxial head mesoderm and apical ectodermal ridge.

The protein resides in the secreted. The protein localises to the extracellular space. It localises to the extracellular matrix. Inhibited by 2-mercaptomethyl-3-guanidinoethylthiopropanoic acid (MGTA) and guanidinoethylmercaptosuccinic acid (GEMSA). Inhibited by chelating agents such as EDTA and EGTA. In terms of biological role, cleaves substrates with C-terminal arginine residues. Modulates the Wnt signaling pathway, probably by cleaving some undefined protein. Regulates the development of skeletal elements during development, probably by activating WNT4. The protein is Carboxypeptidase Z (CPZ) of Gallus gallus (Chicken).